A 189-amino-acid polypeptide reads, in one-letter code: Mediator of RNA polymerase II transcription subunit 30 (189 aa).

Positions 138–178 (SPESEDEIEKLEEQALSLRMEIAKKNVHVKELIDKLRELIA) form a coiled coil.

It belongs to the plant Mediator complex subunit 30 family. Component of the Mediator complex.

The protein resides in the nucleus. Functionally, component of the Mediator complex, a coactivator involved in the regulated transcription of nearly all RNA polymerase II-dependent genes. Mediator functions as a bridge to convey information from gene-specific regulatory proteins to the basal RNA polymerase II transcription machinery. The Mediator complex, having a compact conformation in its free form, is recruited to promoters by direct interactions with regulatory proteins and serves for the assembly of a functional preinitiation complex with RNA polymerase II and the general transcription factors. This is Mediator of RNA polymerase II transcription subunit 30 (MED30) from Arabidopsis thaliana (Mouse-ear cress).